A 428-amino-acid chain; its full sequence is Gamma-glutamyl phosphate reductase (428 aa).

The protein belongs to the gamma-glutamyl phosphate reductase family.

The protein resides in the cytoplasm. It catalyses the reaction L-glutamate 5-semialdehyde + phosphate + NADP(+) = L-glutamyl 5-phosphate + NADPH + H(+). It functions in the pathway amino-acid biosynthesis; L-proline biosynthesis; L-glutamate 5-semialdehyde from L-glutamate: step 2/2. Catalyzes the NADPH-dependent reduction of L-glutamate 5-phosphate into L-glutamate 5-semialdehyde and phosphate. The product spontaneously undergoes cyclization to form 1-pyrroline-5-carboxylate. In Streptomyces avermitilis (strain ATCC 31267 / DSM 46492 / JCM 5070 / NBRC 14893 / NCIMB 12804 / NRRL 8165 / MA-4680), this protein is Gamma-glutamyl phosphate reductase.